A 193-amino-acid polypeptide reads, in one-letter code: Potassium-transporting ATPase KdpC subunit (193 aa).

The chain crosses the membrane as a helical span at residues 14-34; it reads ITFTFLVLCGLVYPLIVTGIA.

The protein belongs to the KdpC family. In terms of assembly, the system is composed of three essential subunits: KdpA, KdpB and KdpC.

It localises to the cell membrane. Its function is as follows. Part of the high-affinity ATP-driven potassium transport (or Kdp) system, which catalyzes the hydrolysis of ATP coupled with the electrogenic transport of potassium into the cytoplasm. This subunit acts as a catalytic chaperone that increases the ATP-binding affinity of the ATP-hydrolyzing subunit KdpB by the formation of a transient KdpB/KdpC/ATP ternary complex. In Bacillus cereus (strain Q1), this protein is Potassium-transporting ATPase KdpC subunit.